Consider the following 121-residue polypeptide: MTTSSTTAPIAQAHGRFIRGSVSKVRRVLDQIRGRTYRDALIMLEFMPYRSTGPITKVLRSAVANAEHNLGLDPASLVISSASADMGPSMKRYRPRAQGRAFQIKKQTCHISIAVAAQPDS.

The protein belongs to the universal ribosomal protein uL22 family. As to quaternary structure, part of the 50S ribosomal subunit.

Functionally, this protein binds specifically to 23S rRNA; its binding is stimulated by other ribosomal proteins, e.g. L4, L17, and L20. It is important during the early stages of 50S assembly. It makes multiple contacts with different domains of the 23S rRNA in the assembled 50S subunit and ribosome. The globular domain of the protein is located near the polypeptide exit tunnel on the outside of the subunit, while an extended beta-hairpin is found that lines the wall of the exit tunnel in the center of the 70S ribosome. This chain is Large ribosomal subunit protein uL22, found in Parasynechococcus marenigrum (strain WH8102).